We begin with the raw amino-acid sequence, 129 residues long: Small ribosomal subunit protein uS11 (129 aa).

Belongs to the universal ribosomal protein uS11 family. As to quaternary structure, part of the 30S ribosomal subunit. Interacts with proteins S7 and S18. Binds to IF-3.

Its function is as follows. Located on the platform of the 30S subunit, it bridges several disparate RNA helices of the 16S rRNA. Forms part of the Shine-Dalgarno cleft in the 70S ribosome. In Brucella abortus (strain S19), this protein is Small ribosomal subunit protein uS11.